Consider the following 187-residue polypeptide: Core-binding factor subunit beta (187 aa).

Ser-10 bears the Phosphoserine; by CK2 mark. The segment at 139-187 (AQQAFEEARRRTREFEDRDRSHREEMEARRQQDPSPGSNLGGGDDLKLR) is disordered. A compositionally biased stretch (basic and acidic residues) spans 144 to 170 (EEARRRTREFEDRDRSHREEMEARRQQ). Ser-159 carries the phosphoserine; by PKC modification.

It belongs to the CBF-beta family. As to quaternary structure, heterodimer with RUNX1, RUNX2 and RUNX3. Interacts with COPRS. Found in a complex with PRMT5 and RUNX1. Expressed in all tissues tested. Highest level in thymus, but also abundantly expressed in muscle, lung and brain.

It localises to the nucleus. Its function is as follows. Forms the heterodimeric complex core-binding factor (CBF) with RUNX family proteins (RUNX1, RUNX2, and RUNX3). RUNX members modulate the transcription of their target genes through recognizing the core consensus binding sequence 5'-TGTGGT-3', or very rarely, 5'-TGCGGT-3', within their regulatory regions via their runt domain, while CBFB is a non-DNA-binding regulatory subunit that allosterically enhances the sequence-specific DNA-binding capacity of RUNX. The heterodimers bind to the core site of a number of enhancers and promoters, including murine leukemia virus, polyomavirus enhancer, T-cell receptor enhancers, LCK, IL3 and GM-CSF promoters. CBF complexes repress ZBTB7B transcription factor during cytotoxic (CD8+) T cell development. They bind to RUNX-binding sequence within the ZBTB7B locus acting as transcriptional silencer and allowing for cytotoxic T cell differentiation. The sequence is that of Core-binding factor subunit beta (Cbfb) from Mus musculus (Mouse).